A 351-amino-acid chain; its full sequence is Dihydroorotate dehydrogenase (quinone) (351 aa).

Residues 61 to 65 (AGLDK) and threonine 85 contribute to the FMN site. Residue lysine 65 participates in substrate binding. Residue 110 to 114 (NRMGF) participates in substrate binding. 2 residues coordinate FMN: asparagine 139 and asparagine 172. Asparagine 172 provides a ligand contact to substrate. Residue serine 175 is the Nucleophile of the active site. Asparagine 177 serves as a coordination point for substrate. FMN is bound by residues lysine 217 and threonine 245. 246-247 (NT) is a substrate binding site. Residues glycine 268, glycine 297, and 318–319 (YS) contribute to the FMN site.

The protein belongs to the dihydroorotate dehydrogenase family. Type 2 subfamily. In terms of assembly, monomer. The cofactor is FMN.

It localises to the cell membrane. It catalyses the reaction (S)-dihydroorotate + a quinone = orotate + a quinol. It participates in pyrimidine metabolism; UMP biosynthesis via de novo pathway; orotate from (S)-dihydroorotate (quinone route): step 1/1. Catalyzes the conversion of dihydroorotate to orotate with quinone as electron acceptor. The protein is Dihydroorotate dehydrogenase (quinone) of Xanthomonas oryzae pv. oryzae (strain MAFF 311018).